The primary structure comprises 504 residues: MTLYLDGETLTIEDIKSFLQQQSKIEIIDDALERVKKSRAVVERIIENEETVYGITTGFGLFSDVRIDPTQYNELQVNLIRSHACGLGEPFSKEVALVMMILRLNTLLKGHSGATLELVRQLQFFINERIIPIIPQQGSLGASGDLAPLSHLALALIGEGKVLYRGEEKDSDDVLRELNRQPLNLQAKEGLALINGTQAMTAQGVISYIEAEDLGYQSEWIAALTHQSLNGIIDAYRHDVHSVRNFQEQINVAARMRDWLEGSTLTTRQAEIRVQDAYTLRCIPQIHGASFQVFNYVKQQLEFEMNAANDNPLIFEEANETFVISGGNFHGQPIAFALDHLKLGVSELANVSERRLERLVNPQLNGDLPAFLSPEPGLQSGAMIMQYAAASLVSENKTLAHPASVDSITSSANQEDHVSMGTTAARHGYQIIENARRVLAIECVIALQAAELKGVEGLSPKTRRKYEEFRSIVPSITHDRQFHKDIEAVAQYLKQSIYQTTACH.

A cross-link (5-imidazolinone (Ala-Gly)) is located at residues 142-144; the sequence is ASG. S143 is modified (2,3-didehydroalanine (Ser)).

The protein belongs to the PAL/histidase family. In terms of processing, contains an active site 4-methylidene-imidazol-5-one (MIO), which is formed autocatalytically by cyclization and dehydration of residues Ala-Ser-Gly.

It is found in the cytoplasm. The enzyme catalyses L-histidine = trans-urocanate + NH4(+). Its pathway is amino-acid degradation; L-histidine degradation into L-glutamate; N-formimidoyl-L-glutamate from L-histidine: step 1/3. The chain is Histidine ammonia-lyase from Staphylococcus aureus (strain JH1).